A 162-amino-acid chain; its full sequence is UPF0114 protein Pput_0713 (162 aa).

Transmembrane regions (helical) follow at residues 15 to 35 (LLAP…LKFF), 53 to 73 (LILV…LVMV), 109 to 126 (VAAS…RVFM), and 136 to 156 (LMWY…MGYL).

This sequence belongs to the UPF0114 family.

The protein resides in the cell membrane. In Pseudomonas putida (strain ATCC 700007 / DSM 6899 / JCM 31910 / BCRC 17059 / LMG 24140 / F1), this protein is UPF0114 protein Pput_0713.